Here is a 339-residue protein sequence, read N- to C-terminus: DNA-directed RNA polymerase subunit alpha (339 aa).

The alpha N-terminal domain (alpha-NTD) stretch occupies residues 1–233; that stretch reads MVREKVRIST…DLFIPFLHAE (233 aa). An alpha C-terminal domain (alpha-CTD) region spans residues 267–339; the sequence is IALKSIFIDQ…FTINLPKNKF (73 aa).

Belongs to the RNA polymerase alpha chain family. In plastids the minimal PEP RNA polymerase catalytic core is composed of four subunits: alpha, beta, beta', and beta''. When a (nuclear-encoded) sigma factor is associated with the core the holoenzyme is formed, which can initiate transcription.

It localises to the plastid. It is found in the chloroplast. It carries out the reaction RNA(n) + a ribonucleoside 5'-triphosphate = RNA(n+1) + diphosphate. Functionally, DNA-dependent RNA polymerase catalyzes the transcription of DNA into RNA using the four ribonucleoside triphosphates as substrates. In Populus alba (White poplar), this protein is DNA-directed RNA polymerase subunit alpha.